Reading from the N-terminus, the 816-residue chain is Neuronal PAS domain-containing protein 2 (816 aa).

Positions 1–10 are enriched in basic and acidic residues; that stretch reads MDEDEKDRAK. A disordered region spans residues 1–21; sequence MDEDEKDRAKRASRNKSEKKR. Residues 1 to 61 are sufficient for heterodimer formation with BMAL1, E-box binding and for the effect of NADPH; that stretch reads MDEDEKDRAK…VIGFLQKHNE (61 aa). In terms of domain architecture, bHLH spans 9–59; sequence AKRASRNKSEKKRRDQFNVLIKELSSMLPGNTRKMDKTTVLEKVIGFLQKH. In terms of domain architecture, PAS 1 spans 82–152; sequence NEEFTQLMLE…KILSSHMLVT (71 aa). Heme b-binding residues include H119 and H171. One can recognise a PAS 2 domain in the interval 237 to 307; the sequence is FLKEMCVADE…RCHQHLMQFG (71 aa). The PAC domain occupies 311-354; that stretch reads SCCYRFLTKGQQWIWLQTHYYITYHQWNSKPEFIVCTHSVVSYA. Disordered stretches follow at residues 364–431, 610–639, 685–705, and 742–816; these read LALE…STPT, ISAQ…SQFS, QPMM…RTGR, and PSFP…LSES. Low complexity predominate over residues 400–413; sequence SGLPSSPSPSASSR. Residues 420–431 are compositionally biased toward polar residues; that stretch reads HTAMSEPTSTPT. Low complexity predominate over residues 623 to 639; that stretch reads LLPASGRSLSSLPSQFS. A compositionally biased stretch (low complexity) spans 745-759; sequence PASRPSPLQPAQAQQ. Over residues 780–789 the composition is skewed to polar residues; that stretch reads LLSTFSQQPG. The segment covering 806 to 816 has biased composition (basic residues); that stretch reads PSRRVSRLSES.

In terms of assembly, component of the circadian clock oscillator which includes the CRY proteins, CLOCK or NPAS2, BMAL1 or BMAL2, CSNK1D and/or CSNK1E, TIMELESS and the PER proteins. Efficient DNA binding requires dimerization with another bHLH protein. Interacts with NCOA3, KAT2B and CREBBP. Forms a heterodimer with BMAL1 and this heterodimerization is required for E-box-dependent transactivation. Interacts with EP300. It depends on heme as a cofactor. Expressed in the retinal ganglion cells (at protein level). Expressed in the hypothalamic suprachiasmatic nuclei (SCN) of the brain. Also found in spinal cord, and to a lesser extent in colon, small intestine and uterus. Exhibits a diurnal variation in its expression in the brain.

The protein localises to the nucleus. Its activity is regulated as follows. Carbon monoxide (CO) and the redox state of the cell can modulate the transcriptional activity of the NPAS2-BMAL1 heterodimer. NADH and NADPH enhance the DNA-binding activity of the heterodimer whereas CO binds the heme group in NPAS2 and inhibits the DNA-binding activity of the heterodimer. Transcriptional activator which forms a core component of the circadian clock. The circadian clock, an internal time-keeping system, regulates various physiological processes through the generation of approximately 24 hour circadian rhythms in gene expression, which are translated into rhythms in metabolism and behavior. It is derived from the Latin roots 'circa' (about) and 'diem' (day) and acts as an important regulator of a wide array of physiological functions including metabolism, sleep, body temperature, blood pressure, endocrine, immune, cardiovascular, and renal function. Consists of two major components: the central clock, residing in the suprachiasmatic nucleus (SCN) of the brain, and the peripheral clocks that are present in nearly every tissue and organ system. Both the central and peripheral clocks can be reset by environmental cues, also known as Zeitgebers (German for 'timegivers'). The predominant Zeitgeber for the central clock is light, which is sensed by retina and signals directly to the SCN. The central clock entrains the peripheral clocks through neuronal and hormonal signals, body temperature and feeding-related cues, aligning all clocks with the external light/dark cycle. Circadian rhythms allow an organism to achieve temporal homeostasis with its environment at the molecular level by regulating gene expression to create a peak of protein expression once every 24 hours to control when a particular physiological process is most active with respect to the solar day. Transcription and translation of core clock components (CLOCK, NPAS2, BMAL1, BMAL2, PER1, PER2, PER3, CRY1 and CRY2) plays a critical role in rhythm generation, whereas delays imposed by post-translational modifications (PTMs) are important for determining the period (tau) of the rhythms (tau refers to the period of a rhythm and is the length, in time, of one complete cycle). A diurnal rhythm is synchronized with the day/night cycle, while the ultradian and infradian rhythms have a period shorter and longer than 24 hours, respectively. Disruptions in the circadian rhythms contribute to the pathology of cardiovascular diseases, cancer, metabolic syndromes and aging. A transcription/translation feedback loop (TTFL) forms the core of the molecular circadian clock mechanism. Transcription factors, CLOCK or NPAS2 and BMAL1 or BMAL2, form the positive limb of the feedback loop, act in the form of a heterodimer and activate the transcription of core clock genes and clock-controlled genes (involved in key metabolic processes), harboring E-box elements (5'-CACGTG-3') within their promoters. The core clock genes: PER1/2/3 and CRY1/2 which are transcriptional repressors form the negative limb of the feedback loop and interact with the CLOCK|NPAS2-BMAL1|BMAL2 heterodimer inhibiting its activity and thereby negatively regulating their own expression. This heterodimer also activates nuclear receptors NR1D1/2 and RORA/B/G, which form a second feedback loop and which activate and repress BMAL1 transcription, respectively. The NPAS2-BMAL1 heterodimer positively regulates the expression of MAOA, F7 and LDHA and modulates the circadian rhythm of daytime contrast sensitivity by regulating the rhythmic expression of adenylate cyclase type 1 (ADCY1) in the retina. NPAS2 plays an important role in sleep homeostasis and in maintaining circadian behaviors in normal light/dark and feeding conditions and in the effective synchronization of feeding behavior with scheduled food availability. Regulates the gene transcription of key metabolic pathways in the liver and is involved in DNA damage response by regulating several cell cycle and DNA repair genes. Controls the circadian rhythm of NR0B2 expression by binding rhythmically to its promoter. Mediates the diurnal variation in the expression of GABARA1 receptor in the brain and contributes to the regulation of anxiety-like behaviors and GABAergic neurotransmission in the ventral striatum. The chain is Neuronal PAS domain-containing protein 2 (Npas2) from Mus musculus (Mouse).